We begin with the raw amino-acid sequence, 211 residues long: Dual specificity protein phosphatase 26 (211 aa).

In terms of domain architecture, Tyrosine-protein phosphatase spans 60 to 207 (NHADEVWPGL…LLALDRRLRQ (148 aa)). The active-site Phosphocysteine intermediate is the C152.

This sequence belongs to the protein-tyrosine phosphatase family. Non-receptor class dual specificity subfamily. As to quaternary structure, interacts with HSF4. In terms of tissue distribution, brain. In the brain it is expressed ubiquitously except in the hippocampus. Expressed in embryonal cancers (retinoblastoma, neuroepithilioma and neuroblastoma) and in anaplatic thyroid cancer.

It localises to the cytoplasm. The protein resides in the nucleus. The protein localises to the golgi apparatus. It carries out the reaction O-phospho-L-tyrosyl-[protein] + H2O = L-tyrosyl-[protein] + phosphate. It catalyses the reaction O-phospho-L-seryl-[protein] + H2O = L-seryl-[protein] + phosphate. The enzyme catalyses O-phospho-L-threonyl-[protein] + H2O = L-threonyl-[protein] + phosphate. Functionally, inactivates MAPK1 and MAPK3 which leads to dephosphorylation of heat shock factor protein 4 and a reduction in its DNA-binding activity. Inhibits MAP kinase p38 by dephosphorylating it and inhibits p38-mediated apoptosis in anaplastic thyroid cancer cells. Can also induce activation of MAP kinase p38 and c-Jun N-terminal kinase (JNK). This chain is Dual specificity protein phosphatase 26 (DUSP26), found in Homo sapiens (Human).